The chain runs to 309 residues: Ribonuclease Z (309 aa).

Zn(2+) is bound by residues H63, H65, D67, H68, H145, D216, and H274. Catalysis depends on D67, which acts as the Proton acceptor.

The protein belongs to the RNase Z family. Homodimer. The cofactor is Zn(2+).

The enzyme catalyses Endonucleolytic cleavage of RNA, removing extra 3' nucleotides from tRNA precursor, generating 3' termini of tRNAs. A 3'-hydroxy group is left at the tRNA terminus and a 5'-phosphoryl group is left at the trailer molecule.. In terms of biological role, zinc phosphodiesterase, which displays some tRNA 3'-processing endonuclease activity. Probably involved in tRNA maturation, by removing a 3'-trailer from precursor tRNA. This chain is Ribonuclease Z, found in Streptococcus suis (strain 98HAH33).